Reading from the N-terminus, the 278-residue chain is Hydroxyethylthiazole kinase (278 aa).

Position 49 (methionine 49) interacts with substrate. Residues asparagine 125 and serine 171 each coordinate ATP. Substrate is bound at residue glycine 198.

Belongs to the Thz kinase family. Mg(2+) serves as cofactor.

The catalysed reaction is 5-(2-hydroxyethyl)-4-methylthiazole + ATP = 4-methyl-5-(2-phosphooxyethyl)-thiazole + ADP + H(+). It participates in cofactor biosynthesis; thiamine diphosphate biosynthesis; 4-methyl-5-(2-phosphoethyl)-thiazole from 5-(2-hydroxyethyl)-4-methylthiazole: step 1/1. Its function is as follows. Catalyzes the phosphorylation of the hydroxyl group of 4-methyl-5-beta-hydroxyethylthiazole (THZ). The protein is Hydroxyethylthiazole kinase of Natronomonas pharaonis (strain ATCC 35678 / DSM 2160 / CIP 103997 / JCM 8858 / NBRC 14720 / NCIMB 2260 / Gabara) (Halobacterium pharaonis).